Consider the following 87-residue polypeptide: Translation initiation factor IF-1 2 (87 aa).

Positions 1–72 (MAADDHIEME…TKGRIARRTT (72 aa)) constitute an S1-like domain. The disordered stretch occupies residues 65–87 (GRIARRTTTPSGGPRPARSGNRR).

This sequence belongs to the IF-1 family. As to quaternary structure, component of the 30S ribosomal translation pre-initiation complex which assembles on the 30S ribosome in the order IF-2 and IF-3, IF-1 and N-formylmethionyl-tRNA(fMet); mRNA recruitment can occur at any time during PIC assembly.

The protein localises to the cytoplasm. In terms of biological role, one of the essential components for the initiation of protein synthesis. Stabilizes the binding of IF-2 and IF-3 on the 30S subunit to which N-formylmethionyl-tRNA(fMet) subsequently binds. Helps modulate mRNA selection, yielding the 30S pre-initiation complex (PIC). Upon addition of the 50S ribosomal subunit IF-1, IF-2 and IF-3 are released leaving the mature 70S translation initiation complex. The chain is Translation initiation factor IF-1 2 from Nitratidesulfovibrio vulgaris (strain ATCC 29579 / DSM 644 / CCUG 34227 / NCIMB 8303 / VKM B-1760 / Hildenborough) (Desulfovibrio vulgaris).